Here is an 851-residue protein sequence, read N- to C-terminus: mRNA-capping enzyme catalytic subunit (851 aa).

A triphosphatase-guanylyltransferase region spans residues 1–544 (MDKYISKTPL…EEEKLADIAA (544 aa)). The Mg(2+) site is built by Glu-38, Glu-40, Glu-199, and Glu-201. The active-site N6-GMP-lysine intermediate is Lys-266. 554–555 (LN) is a binding site for S-adenosyl-L-methionine. The region spanning 565 to 850 (RVRGALGILS…HYMVYVFSKE (286 aa)) is the mRNA cap 0 methyltransferase domain. 574–575 (SN) serves as a coordination point for mRNA. S-adenosyl-L-methionine is bound by residues Lys-578, Asp-603, Asp-625, and 683-685 (QFA).

It in the N-terminal section; belongs to the dsDNA virus mRNA guanylyltransferase family. This sequence in the C-terminal section; belongs to the class I-like SAM-binding methyltransferase superfamily. mRNA cap 0 methyltransferase family. Heterodimer of a catalytic and a regulatory subunit. Intrinsic methyltransferase activity of the catalytic subunit is weak and needs to be stimulated 30- to 50-fold by the regulatory subunit, which is itself catalytically inert. The cofactor is Mg(2+).

It is found in the virion. The catalysed reaction is a 5'-end triphospho-ribonucleoside in mRNA + H2O = a 5'-end diphospho-ribonucleoside in mRNA + phosphate + H(+). It catalyses the reaction a 5'-end diphospho-ribonucleoside in mRNA + GTP + H(+) = a 5'-end (5'-triphosphoguanosine)-ribonucleoside in mRNA + diphosphate. It carries out the reaction a 5'-end (5'-triphosphoguanosine)-ribonucleoside in mRNA + S-adenosyl-L-methionine = a 5'-end (N(7)-methyl 5'-triphosphoguanosine)-ribonucleoside in mRNA + S-adenosyl-L-homocysteine. Functionally, catalytic subunit of the mRNA capping enzyme which catalyzes three enzymatic reactions: the 5' triphosphate end of the pre-mRNA is hydrolyzed to a diphosphate by RNA 5' triphosphatase; the diphosphate RNA end is capped with GMP by RNA guanylyltransferase and the GpppN cap is methylated by RNA (guanine-N7) methyltransferase. Heterodimeric mRNA capping enzyme catalyzes the linkage of a N7-methyl-guanosine moiety to the first transcribed nucleotide (cap 0 structure), whereas the polymerase associated VP39 is responsible for a second methylation at the 2'-O position of the ribose (cap 1 structure). The heterodimeric enzyme is also involved in early viral gene transcription termination and intermediate viral gene transcription initiation. Early gene transcription termination requires the termination factor VTF, the DNA-dependent ATPase NPH-I and the Rap94 subunit of the viral RNA polymerase, as well as the presence of a specific termination motif. Binds, together with RAP94, to the termination motif 5'-UUUUUNU-3' in the nascent early mRNA. In Fowlpox virus (strain NVSL) (FPV), this protein is mRNA-capping enzyme catalytic subunit.